Reading from the N-terminus, the 1367-residue chain is Dynactin, 150 kDa isoform (1367 aa).

The CAP-Gly domain maps to 28-70 (GETAFAPGTWVGIELDEPSGKNDGSVQGERYFNCEMGYGMFVR). The segment at 76–318 (VIAQPPPPPP…NLKATTITPR (243 aa)) is disordered. Composition is skewed to low complexity over residues 88–99 (TFRRSVTTRPTS) and 132–149 (PSRT…RSPT). Polar residues predominate over residues 150–163 (KQLATASSSGNPSR). Composition is skewed to low complexity over residues 164–190 (SGTP…SRHS) and 243–259 (STGS…KRGS). Coiled coils occupy residues 321 to 598 (ITNT…MQEE), 637 to 698 (LQSD…EAEQ), and 1039 to 1199 (AELK…RARL).

The protein belongs to the dynactin 150 kDa subunit family. In terms of assembly, large macromolecular complex of at least 10 components; p150(glued) binds directly to microtubules and to cytoplasmic dynein.

It localises to the cytoplasm. It is found in the cytoskeleton. Functionally, required for the cytoplasmic dynein-driven retrograde movement of vesicles and organelles along microtubules. Dynein-dynactin interaction is a key component of the mechanism of axonal transport of vesicles and organelles. This chain is Dynactin, 150 kDa isoform (ro-3), found in Neurospora crassa (strain ATCC 24698 / 74-OR23-1A / CBS 708.71 / DSM 1257 / FGSC 987).